Reading from the N-terminus, the 213-residue chain is N-(5'-phosphoribosyl)anthranilate isomerase (213 aa).

The protein belongs to the TrpF family.

It catalyses the reaction N-(5-phospho-beta-D-ribosyl)anthranilate = 1-(2-carboxyphenylamino)-1-deoxy-D-ribulose 5-phosphate. Its pathway is amino-acid biosynthesis; L-tryptophan biosynthesis; L-tryptophan from chorismate: step 3/5. The polypeptide is N-(5'-phosphoribosyl)anthranilate isomerase (Rhodopseudomonas palustris (strain ATCC BAA-98 / CGA009)).